Reading from the N-terminus, the 262-residue chain is Small ribosomal subunit protein eS4B (262 aa).

In terms of domain architecture, S4 RNA-binding spans 42 to 105; that stretch reads LPLIVFLRNR…GEHFRLVYDI (64 aa). Phosphoserine is present on serine 223.

The protein belongs to the eukaryotic ribosomal protein eS4 family. In terms of assembly, component of the small ribosomal subunit (SSU). Mature yeast ribosomes consist of a small (40S) and a large (60S) subunit. The 40S small subunit contains 1 molecule of ribosomal RNA (18S rRNA) and at least 33 different proteins. The large 60S subunit contains 3 rRNA molecules (25S, 5.8S and 5S rRNA) and at least 46 different proteins.

It localises to the cytoplasm. Its subcellular location is the nucleus. The protein resides in the nucleolus. Functionally, component of the ribosome, a large ribonucleoprotein complex responsible for the synthesis of proteins in the cell. The small ribosomal subunit (SSU) binds messenger RNAs (mRNAs) and translates the encoded message by selecting cognate aminoacyl-transfer RNA (tRNA) molecules. The large subunit (LSU) contains the ribosomal catalytic site termed the peptidyl transferase center (PTC), which catalyzes the formation of peptide bonds, thereby polymerizing the amino acids delivered by tRNAs into a polypeptide chain. The nascent polypeptides leave the ribosome through a tunnel in the LSU and interact with protein factors that function in enzymatic processing, targeting, and the membrane insertion of nascent chains at the exit of the ribosomal tunnel. This is Small ribosomal subunit protein eS4B (rps402) from Schizosaccharomyces pombe (strain 972 / ATCC 24843) (Fission yeast).